The chain runs to 164 residues: uncharacterized protein (164 aa).

The region spanning glutamate 28–asparagine 157 is the HTH marR-type domain. A DNA-binding region (H-T-H motif) is located at residues glutamine 71–serine 94.

This is an uncharacterized protein from Bacillus subtilis (strain 168).